We begin with the raw amino-acid sequence, 88 residues long: Phosphocarrier protein HPr (88 aa).

The HPr domain occupies 1 to 88; the sequence is MKTQQFTVID…TLLTEMGLAQ (88 aa). Catalysis depends on His-15, which acts as the Pros-phosphohistidine intermediate. Position 46 is a phosphoserine; by HPrK/P (Ser-46).

Belongs to the HPr family.

The protein resides in the cytoplasm. Its activity is regulated as follows. Phosphorylation on Ser-46 inhibits the phosphoryl transfer from enzyme I to HPr. Functionally, general (non sugar-specific) component of the phosphoenolpyruvate-dependent sugar phosphotransferase system (sugar PTS). This major carbohydrate active-transport system catalyzes the phosphorylation of incoming sugar substrates concomitantly with their translocation across the cell membrane. The phosphoryl group from phosphoenolpyruvate (PEP) is transferred to the phosphoryl carrier protein HPr by enzyme I. Phospho-HPr then transfers it to the PTS EIIA domain. Its function is as follows. P-Ser-HPr interacts with the catabolite control protein A (CcpA), forming a complex that binds to DNA at the catabolite response elements cre, operator sites preceding a large number of catabolite-regulated genes. Thus, P-Ser-HPr is a corepressor in carbon catabolite repression (CCR), a mechanism that allows bacteria to coordinate and optimize the utilization of available carbon sources. P-Ser-HPr also plays a role in inducer exclusion, in which it probably interacts with several non-PTS permeases and inhibits their transport activity. The protein is Phosphocarrier protein HPr (ptsH) of Lysinibacillus sphaericus (Bacillus sphaericus).